The following is a 351-amino-acid chain: 4-hydroxy-3-methylbut-2-enyl diphosphate reductase (351 aa).

Cysteine 18 is a [4Fe-4S] cluster binding site. Histidine 47 and histidine 83 together coordinate (2E)-4-hydroxy-3-methylbut-2-enyl diphosphate. Dimethylallyl diphosphate contacts are provided by histidine 47 and histidine 83. Isopentenyl diphosphate is bound by residues histidine 47 and histidine 83. Cysteine 105 serves as a coordination point for [4Fe-4S] cluster. Histidine 133 serves as a coordination point for (2E)-4-hydroxy-3-methylbut-2-enyl diphosphate. Histidine 133 serves as a coordination point for dimethylallyl diphosphate. Isopentenyl diphosphate is bound at residue histidine 133. The active-site Proton donor is the glutamate 135. (2E)-4-hydroxy-3-methylbut-2-enyl diphosphate is bound at residue threonine 174. Position 204 (cysteine 204) interacts with [4Fe-4S] cluster. 4 residues coordinate (2E)-4-hydroxy-3-methylbut-2-enyl diphosphate: serine 232, serine 233, asparagine 234, and serine 277. Serine 232, serine 233, asparagine 234, and serine 277 together coordinate dimethylallyl diphosphate. The isopentenyl diphosphate site is built by serine 232, serine 233, asparagine 234, and serine 277.

Belongs to the IspH family. [4Fe-4S] cluster is required as a cofactor.

The enzyme catalyses isopentenyl diphosphate + 2 oxidized [2Fe-2S]-[ferredoxin] + H2O = (2E)-4-hydroxy-3-methylbut-2-enyl diphosphate + 2 reduced [2Fe-2S]-[ferredoxin] + 2 H(+). The catalysed reaction is dimethylallyl diphosphate + 2 oxidized [2Fe-2S]-[ferredoxin] + H2O = (2E)-4-hydroxy-3-methylbut-2-enyl diphosphate + 2 reduced [2Fe-2S]-[ferredoxin] + 2 H(+). The protein operates within isoprenoid biosynthesis; dimethylallyl diphosphate biosynthesis; dimethylallyl diphosphate from (2E)-4-hydroxy-3-methylbutenyl diphosphate: step 1/1. It participates in isoprenoid biosynthesis; isopentenyl diphosphate biosynthesis via DXP pathway; isopentenyl diphosphate from 1-deoxy-D-xylulose 5-phosphate: step 6/6. Functionally, catalyzes the conversion of 1-hydroxy-2-methyl-2-(E)-butenyl 4-diphosphate (HMBPP) into a mixture of isopentenyl diphosphate (IPP) and dimethylallyl diphosphate (DMAPP). Acts in the terminal step of the DOXP/MEP pathway for isoprenoid precursor biosynthesis. This Bartonella tribocorum (strain CIP 105476 / IBS 506) protein is 4-hydroxy-3-methylbut-2-enyl diphosphate reductase.